The sequence spans 121 residues: Small ribosomal subunit protein uS13 (121 aa).

The interval 93-121 is disordered; the sequence is RGLPVRGQNTKNNARTRKGPRRTVANKKK. Positions 106–121 are enriched in basic residues; it reads ARTRKGPRRTVANKKK.

The protein belongs to the universal ribosomal protein uS13 family. In terms of assembly, part of the 30S ribosomal subunit. Forms a loose heterodimer with protein S19. Forms two bridges to the 50S subunit in the 70S ribosome.

Its function is as follows. Located at the top of the head of the 30S subunit, it contacts several helices of the 16S rRNA. In the 70S ribosome it contacts the 23S rRNA (bridge B1a) and protein L5 of the 50S subunit (bridge B1b), connecting the 2 subunits; these bridges are implicated in subunit movement. Contacts the tRNAs in the A and P-sites. In Bacillus pumilus (strain SAFR-032), this protein is Small ribosomal subunit protein uS13.